A 63-amino-acid chain; its full sequence is Alpha-conotoxin-like PuSG1.2 (63 aa).

The signal sequence occupies residues 1-21 (MRCLALLVVTLLLFTATATTG). A propeptide spanning residues 22-43 (ASNGMNAAASGEAPDSISLAVR) is cleaved from the precursor. 2 disulfides stabilise this stretch: C46/C52 and C47/C60. Residues 48–50 (PDP) are lacks the Ser-Xaa-Pro motif that is crucial for potent interaction with nAChR.

Belongs to the conotoxin A superfamily. In terms of tissue distribution, expressed by the salivary gland.

The protein localises to the secreted. Alpha-conopeptides-like may act on postsynaptic membranes, they bind to the nicotinic acetylcholine receptors (nAChR) and thus inhibit them. Has possibly a distinct nAChR binding mode from other alpha-conotoxins, due to a different three residue motif (lacks the Ser-Xaa-Pro motif). The protein is Alpha-conotoxin-like PuSG1.2 of Conus pulicarius (Flea-bitten cone).